Consider the following 278-residue polypeptide: Small ribosomal subunit protein uS2 (278 aa).

Residues 233–257 (IDMEAAGEAPANKGKKKSVKARLDK) are disordered.

It belongs to the universal ribosomal protein uS2 family.

The polypeptide is Small ribosomal subunit protein uS2 (Bacteroides thetaiotaomicron (strain ATCC 29148 / DSM 2079 / JCM 5827 / CCUG 10774 / NCTC 10582 / VPI-5482 / E50)).